We begin with the raw amino-acid sequence, 388 residues long: GTPase Obg (388 aa).

The 159-residue stretch at 1–159 folds into the Obg domain; the sequence is MKFVDEAVIR…RSLKLELLLL (159 aa). The OBG-type G domain maps to 160 to 333; sequence ADVGLLGMPN…LAAKLWDFIQ (174 aa). Residues 166–173, 191–195, 213–216, 283–286, and 314–316 each bind GTP; these read GMPNAGKS, FTTLV, DIPG, NKAD, and SAY. Residues serine 173 and threonine 193 each contribute to the Mg(2+) site.

Belongs to the TRAFAC class OBG-HflX-like GTPase superfamily. OBG GTPase family. Monomer. The cofactor is Mg(2+).

Its subcellular location is the cytoplasm. An essential GTPase which binds GTP, GDP and possibly (p)ppGpp with moderate affinity, with high nucleotide exchange rates and a fairly low GTP hydrolysis rate. Plays a role in control of the cell cycle, stress response, ribosome biogenesis and in those bacteria that undergo differentiation, in morphogenesis control. The protein is GTPase Obg of Shewanella oneidensis (strain ATCC 700550 / JCM 31522 / CIP 106686 / LMG 19005 / NCIMB 14063 / MR-1).